A 255-amino-acid chain; its full sequence is GTP cyclohydrolase III 1 (255 aa).

It belongs to the archaeal-type GTP cyclohydrolase family.

It carries out the reaction GTP + 3 H2O = 2-amino-5-formylamino-6-(5-phospho-D-ribosylamino)pyrimidin-4(3H)-one + 2 phosphate + 2 H(+). Functionally, catalyzes the formation of 2-amino-5-formylamino-6-ribofuranosylamino-4(3H)-pyrimidinone ribonucleotide monophosphate and inorganic phosphate from GTP. Also has an independent pyrophosphate phosphohydrolase activity. The sequence is that of GTP cyclohydrolase III 1 (gch31) from Halobacterium salinarum (strain ATCC 700922 / JCM 11081 / NRC-1) (Halobacterium halobium).